Here is a 249-residue protein sequence, read N- to C-terminus: tRNA pseudouridine synthase A (249 aa).

D52 acts as the Nucleophile in catalysis. Residue Y111 coordinates substrate.

This sequence belongs to the tRNA pseudouridine synthase TruA family. In terms of assembly, homodimer.

It carries out the reaction uridine(38/39/40) in tRNA = pseudouridine(38/39/40) in tRNA. Functionally, formation of pseudouridine at positions 38, 39 and 40 in the anticodon stem and loop of transfer RNAs. The chain is tRNA pseudouridine synthase A from Brachyspira hyodysenteriae (strain ATCC 49526 / WA1).